A 1021-amino-acid chain; its full sequence is Transmembrane protein 132A (1021 aa).

Residues 1–32 (MTERAAAAPRGPYGAWLCLLVALALEVVRVGS) form the signal peptide. The Extracellular segment spans residues 33–848 (NQNTLDPIYL…VTDLELGMYA (816 aa)). The disordered stretch occupies residues 207 to 226 (PAGEGPGGCGPGTEEEPKEQ). N-linked (GlcNAc...) asparagine glycosylation occurs at Asn276. The segment at 606–913 (IEVRSPLSDS…QLDRCSSSSP (308 aa)) is binds to HSPA5/GRP78. Residues 666–1021 (LPAPKQEVAL…NYMERIRGSS (356 aa)) form a confers cellular localization similar to full-length form region. The disordered stretch occupies residues 793 to 835 (AGDMGSHVGPGIRGKFERAEEEAGKEENEAKEEEEDEEEMVPA). A compositionally biased stretch (basic and acidic residues) spans 806 to 820 (GKFERAEEEAGKEEN). The span at 821–832 (EAKEEEEDEEEM) shows a compositional bias: acidic residues. Residues 849-869 (LLGIFCLAFLIFLVNGVVFVL) form a helical membrane-spanning segment. Residues 870-1021 (RYQRKEPPDS…NYMERIRGSS (152 aa)) are Cytoplasmic-facing. The segment at 903-955 (RQLDRCSSSSPPKGEGGCPCESGAGGDTSTVAPSASESPAGSTSTLARKEAGG) is disordered. Positions 929–948 (DTSTVAPSASESPAGSTSTL) are enriched in polar residues.

This sequence belongs to the TMEM132 family. In terms of assembly, interacts with HSPA5/GRP78. Expressed in the brain in neuronal cells of the hypothalamus, thalamus, cerebral cortex, amygdala, and cerebellum.

It is found in the golgi apparatus membrane. Its subcellular location is the endoplasmic reticulum membrane. In terms of biological role, may play a role in embryonic and postnatal development of the brain. Increased resistance to cell death induced by serum starvation in cultured cells. Regulates cAMP-induced GFAP gene expression via STAT3 phosphorylation. This is Transmembrane protein 132A (Tmem132a) from Rattus norvegicus (Rat).